The following is a 157-amino-acid chain: Transcription elongation factor GreA (157 aa).

The stretch at 14–37 (LREELDRLLKLRPKITEAIAEARE) forms a coiled coil.

It belongs to the GreA/GreB family.

In terms of biological role, necessary for efficient RNA polymerase transcription elongation past template-encoded arresting sites. The arresting sites in DNA have the property of trapping a certain fraction of elongating RNA polymerases that pass through, resulting in locked ternary complexes. Cleavage of the nascent transcript by cleavage factors such as GreA or GreB allows the resumption of elongation from the new 3'terminus. GreA releases sequences of 2 to 3 nucleotides. The polypeptide is Transcription elongation factor GreA (Vibrio cholerae serotype O1 (strain ATCC 39315 / El Tor Inaba N16961)).